A 118-amino-acid chain; its full sequence is Small ribosomal subunit protein uS13 (118 aa).

The tract at residues 99 to 118 (GQRTRTNARTRKGPRKAIKK) is disordered.

This sequence belongs to the universal ribosomal protein uS13 family. Part of the 30S ribosomal subunit. Forms a loose heterodimer with protein S19. Forms two bridges to the 50S subunit in the 70S ribosome.

In terms of biological role, located at the top of the head of the 30S subunit, it contacts several helices of the 16S rRNA. In the 70S ribosome it contacts the 23S rRNA (bridge B1a) and protein L5 of the 50S subunit (bridge B1b), connecting the 2 subunits; these bridges are implicated in subunit movement. Contacts the tRNAs in the A and P-sites. The polypeptide is Small ribosomal subunit protein uS13 (Xylella fastidiosa (strain M23)).